The sequence spans 288 residues: 4-diphosphocytidyl-2-C-methyl-D-erythritol kinase (288 aa).

Lys-13 is an active-site residue. Position 96-106 (96-106) interacts with ATP; that stretch reads PMGGGIGGGSS. The active site involves Asp-138.

It belongs to the GHMP kinase family. IspE subfamily.

It catalyses the reaction 4-CDP-2-C-methyl-D-erythritol + ATP = 4-CDP-2-C-methyl-D-erythritol 2-phosphate + ADP + H(+). Its pathway is isoprenoid biosynthesis; isopentenyl diphosphate biosynthesis via DXP pathway; isopentenyl diphosphate from 1-deoxy-D-xylulose 5-phosphate: step 3/6. Catalyzes the phosphorylation of the position 2 hydroxy group of 4-diphosphocytidyl-2C-methyl-D-erythritol. This chain is 4-diphosphocytidyl-2-C-methyl-D-erythritol kinase, found in Aliivibrio fischeri (strain ATCC 700601 / ES114) (Vibrio fischeri).